We begin with the raw amino-acid sequence, 320 residues long: ATP-dependent 6-phosphofructokinase (320 aa).

Gly-12 lines the ATP pocket. An ADP-binding site is contributed by 22-26 (RGVVR). ATP-binding positions include 73-74 (RF) and 103-106 (GDGS). Asp-104 contributes to the Mg(2+) binding site. 126 to 128 (TID) contributes to the substrate binding site. The active-site Proton acceptor is the Asp-128. ADP is bound at residue Arg-155. Residues Arg-163 and 170–172 (MGR) contribute to the substrate site. Residues 186–188 (GCE), Lys-212, and 214–216 (KKH) each bind ADP. Residues Glu-223, Arg-244, and 250 to 253 (HIQR) contribute to the substrate site.

It belongs to the phosphofructokinase type A (PFKA) family. ATP-dependent PFK group I subfamily. Prokaryotic clade 'B1' sub-subfamily. As to quaternary structure, homotetramer. It depends on Mg(2+) as a cofactor.

It is found in the cytoplasm. The enzyme catalyses beta-D-fructose 6-phosphate + ATP = beta-D-fructose 1,6-bisphosphate + ADP + H(+). Its pathway is carbohydrate degradation; glycolysis; D-glyceraldehyde 3-phosphate and glycerone phosphate from D-glucose: step 3/4. Allosterically activated by ADP and other diphosphonucleosides, and allosterically inhibited by phosphoenolpyruvate. Functionally, catalyzes the phosphorylation of D-fructose 6-phosphate to fructose 1,6-bisphosphate by ATP, the first committing step of glycolysis. This chain is ATP-dependent 6-phosphofructokinase, found in Vibrio cholerae serotype O1 (strain ATCC 39315 / El Tor Inaba N16961).